The following is a 446-amino-acid chain: NAD kinase (446 aa).

Phosphoserine is present on residues Ser46, Ser48, Ser50, Ser55, and Ser64.

Belongs to the NAD kinase family. Requires a divalent metal cation as cofactor. As to expression, widely expressed but not detected in skeletal muscle.

The enzyme catalyses NAD(+) + ATP = ADP + NADP(+) + H(+). The protein is NAD kinase (NADK) of Homo sapiens (Human).